A 420-amino-acid chain; its full sequence is Histidine--tRNA ligase (420 aa).

It belongs to the class-II aminoacyl-tRNA synthetase family. In terms of assembly, homodimer.

Its subcellular location is the cytoplasm. The catalysed reaction is tRNA(His) + L-histidine + ATP = L-histidyl-tRNA(His) + AMP + diphosphate + H(+). In Clostridioides difficile (strain 630) (Peptoclostridium difficile), this protein is Histidine--tRNA ligase.